The following is a 329-amino-acid chain: Phosphoenolpyruvate transferase (329 aa).

Asp61 is a 7,8-didemethyl-8-hydroxy-5-deazariboflavin binding site.

This sequence belongs to the CofD family. As to quaternary structure, homodimer. The cofactor is Mg(2+).

It catalyses the reaction enolpyruvoyl-2-diphospho-5'-guanosine + 7,8-didemethyl-8-hydroxy-5-deazariboflavin = dehydro coenzyme F420-0 + GMP + H(+). It functions in the pathway cofactor biosynthesis; coenzyme F420 biosynthesis. Its function is as follows. Catalyzes the transfer of the phosphoenolpyruvate moiety from enoylpyruvoyl-2-diphospho-5'-guanosine (EPPG) to 7,8-didemethyl-8-hydroxy-5-deazariboflavin (FO) with the formation of dehydro coenzyme F420-0 and GMP. The protein is Phosphoenolpyruvate transferase of Mycobacterium marinum (strain ATCC BAA-535 / M).